The sequence spans 417 residues: Peptidyl-Asp metalloendopeptidase (417 aa).

An N-terminal signal peptide occupies residues 1 to 25; that stretch reads MLSRSIGKAAGGLVLGLSVAAAAHA. Zn(2+) is bound at residue H327. E328 is a catalytic residue. Zn(2+)-binding residues include H331 and H337.

This sequence belongs to the peptidase M72 family. It depends on Zn(2+) as a cofactor.

The catalysed reaction is Cleavage of Xaa-|-Asp, Xaa-|-Glu and Xaa-|-cysteic acid bonds.. In terms of biological role, metalloprotease, specifically cleaves on the N-terminal side of aspartyl, glutamyl and cysteic acid residues. The sequence is that of Peptidyl-Asp metalloendopeptidase from Stenotrophomonas maltophilia (strain R551-3).